We begin with the raw amino-acid sequence, 127 residues long: Ribonuclease P protein component (127 aa).

A disordered region spans residues 99 to 127 (ALSASLRQQLRDGIDRSARRQEPAAERQR). Residues 107–127 (QLRDGIDRSARRQEPAAERQR) show a composition bias toward basic and acidic residues.

The protein belongs to the RnpA family. As to quaternary structure, consists of a catalytic RNA component (M1 or rnpB) and a protein subunit.

The catalysed reaction is Endonucleolytic cleavage of RNA, removing 5'-extranucleotides from tRNA precursor.. RNaseP catalyzes the removal of the 5'-leader sequence from pre-tRNA to produce the mature 5'-terminus. It can also cleave other RNA substrates such as 4.5S RNA. The protein component plays an auxiliary but essential role in vivo by binding to the 5'-leader sequence and broadening the substrate specificity of the ribozyme. This chain is Ribonuclease P protein component, found in Mycobacteroides abscessus (strain ATCC 19977 / DSM 44196 / CCUG 20993 / CIP 104536 / JCM 13569 / NCTC 13031 / TMC 1543 / L948) (Mycobacterium abscessus).